A 435-amino-acid chain; its full sequence is Trigger factor (435 aa).

The PPIase FKBP-type domain occupies 161–246 (GKRVSIDFVG…VNKVEARELP (86 aa)).

This sequence belongs to the FKBP-type PPIase family. Tig subfamily.

Its subcellular location is the cytoplasm. It carries out the reaction [protein]-peptidylproline (omega=180) = [protein]-peptidylproline (omega=0). Functionally, involved in protein export. Acts as a chaperone by maintaining the newly synthesized protein in an open conformation. Functions as a peptidyl-prolyl cis-trans isomerase. This is Trigger factor from Vibrio campbellii (strain ATCC BAA-1116).